The following is a 485-amino-acid chain: NADH-quinone oxidoreductase subunit N (485 aa).

14 helical membrane-spanning segments follow: residues 8–28, 35–55, 71–91, 105–125, 127–147, 159–179, 203–223, 235–255, 271–291, 297–317, 326–346, 373–393, 408–430, and 455–475; these read LIAL…MLSI, FLNA…LWFV, GFAM…CTFA, FYLL…ANHL, ALFL…GYAF, YTIL…LVYA, LLAG…LVPF, PAPV…GVVM, VVLG…ALSQ, LLGY…IALQ, VGVY…VVSL, AAVM…LGFI, WWLV…RVAV, and IVVL…QPLI.

It belongs to the complex I subunit 2 family. NDH-1 is composed of 13 different subunits. Subunits NuoA, H, J, K, L, M, N constitute the membrane sector of the complex.

Its subcellular location is the cell inner membrane. It catalyses the reaction a quinone + NADH + 5 H(+)(in) = a quinol + NAD(+) + 4 H(+)(out). Functionally, NDH-1 shuttles electrons from NADH, via FMN and iron-sulfur (Fe-S) centers, to quinones in the respiratory chain. The immediate electron acceptor for the enzyme in this species is believed to be ubiquinone. Couples the redox reaction to proton translocation (for every two electrons transferred, four hydrogen ions are translocated across the cytoplasmic membrane), and thus conserves the redox energy in a proton gradient. This is NADH-quinone oxidoreductase subunit N from Salmonella schwarzengrund (strain CVM19633).